The chain runs to 497 residues: RNA polymerase sigma factor SigA (497 aa).

Disordered stretches follow at residues 1 to 20 (MSTD…PELS) and 62 to 86 (KTLH…HAPL). Residues 63–73 (TLHENKESDVP) show a composition bias toward basic and acidic residues. The segment covering 74-84 (KKRRGRKPKHA) has biased composition (basic residues). Residues 250–320 (LVTSNLRLVV…TRAIADQART (71 aa)) form a sigma-70 factor domain-2 region. The Interaction with polymerase core subunit RpoC signature appears at 274–277 (DLIQ). Residues 329 to 410 (ETINRLAKAE…DTDAQTPDEF (82 aa)) are sigma-70 factor domain-3. The interval 423–478 (LLNNNLSEQEELIVRMRIGMPPYNEPKTLDEVGQKILIPREKIRQIENKAIRKLRH) is sigma-70 factor domain-4. The segment at residues 451-470 (LDEVGQKILIPREKIRQIEN) is a DNA-binding region (H-T-H motif).

It belongs to the sigma-70 factor family. RpoD/SigA subfamily. Interacts transiently with the RNA polymerase catalytic core.

The protein resides in the cytoplasm. In terms of biological role, sigma factors are initiation factors that promote the attachment of RNA polymerase to specific initiation sites and are then released. This sigma factor is the primary sigma factor during exponential growth. This is RNA polymerase sigma factor SigA from Mycoplasma genitalium (strain ATCC 33530 / DSM 19775 / NCTC 10195 / G37) (Mycoplasmoides genitalium).